The chain runs to 392 residues: Galactose-1-phosphate uridylyltransferase (392 aa).

Cys52 and Cys55 together coordinate Zn(2+). Residues Ala61 and 77 to 78 contribute to the UDP-alpha-D-glucose site; that span reads ND. His126 is a binding site for Zn(2+). A UDP-alpha-D-glucose-binding site is contributed by Asn194. His205 is a Zn(2+) binding site. The Tele-UMP-histidine intermediate role is filled by His207. Gln209 lines the UDP-alpha-D-glucose pocket. Fe cation-binding residues include Glu223, His323, His340, and His342. UDP-alpha-D-glucose is bound by residues 355-358 and 360-361; these read KFLV and YE.

The protein belongs to the galactose-1-phosphate uridylyltransferase type 1 family. In terms of assembly, homodimer. The cofactor is Zn(2+).

The enzyme catalyses alpha-D-galactose 1-phosphate + UDP-alpha-D-glucose = alpha-D-glucose 1-phosphate + UDP-alpha-D-galactose. The protein operates within carbohydrate metabolism; galactose metabolism. This chain is Galactose-1-phosphate uridylyltransferase (gal-7), found in Neurospora crassa (strain ATCC 24698 / 74-OR23-1A / CBS 708.71 / DSM 1257 / FGSC 987).